The sequence spans 250 residues: NAD-dependent protein deacetylase 2 (250 aa).

The Deacetylase sirtuin-type domain occupies 4–250 (MDSKNLFKKA…LRNIWNLIKS (247 aa)). Ala29, Thr33, Phe40, Arg41, Gln107, Ile109, Asp110, and His125 together coordinate NAD(+). Phe40 provides a ligand contact to nicotinamide. Positions 109 and 110 each coordinate nicotinamide. His125 acts as the Proton acceptor in catalysis. Zn(2+) is bound by residues Cys133, Cys136, Cys158, and Cys161. Residues Ser198, Ser199, and Asn219 each coordinate NAD(+).

The protein belongs to the sirtuin family. Class U subfamily. Requires Zn(2+) as cofactor.

The protein localises to the cytoplasm. The enzyme catalyses N(6)-acetyl-L-lysyl-[protein] + NAD(+) + H2O = 2''-O-acetyl-ADP-D-ribose + nicotinamide + L-lysyl-[protein]. Functionally, NAD-dependent protein deacetylase which modulates the activities of several enzymes which are inactive in their acetylated form. The chain is NAD-dependent protein deacetylase 2 from Caldanaerobacter subterraneus subsp. tengcongensis (strain DSM 15242 / JCM 11007 / NBRC 100824 / MB4) (Thermoanaerobacter tengcongensis).